Consider the following 188-residue polypeptide: CMT1A duplicated region transcript 15 protein (188 aa).

As to expression, expressed in fetal heart, kidney, liver, lung and spleen.

In Homo sapiens (Human), this protein is CMT1A duplicated region transcript 15 protein (CDRT15).